We begin with the raw amino-acid sequence, 451 residues long: Serine--tRNA ligase (451 aa).

Residue 258–260 (TSE) coordinates L-serine. 289–291 (RSE) lines the ATP pocket. Residue glutamate 312 participates in L-serine binding. Residue 376 to 379 (EISS) coordinates ATP. An L-serine-binding site is contributed by serine 411.

Belongs to the class-II aminoacyl-tRNA synthetase family. Type-1 seryl-tRNA synthetase subfamily. In terms of assembly, homodimer. The tRNA molecule binds across the dimer.

The protein resides in the cytoplasm. It catalyses the reaction tRNA(Ser) + L-serine + ATP = L-seryl-tRNA(Ser) + AMP + diphosphate + H(+). The enzyme catalyses tRNA(Sec) + L-serine + ATP = L-seryl-tRNA(Sec) + AMP + diphosphate + H(+). It functions in the pathway aminoacyl-tRNA biosynthesis; selenocysteinyl-tRNA(Sec) biosynthesis; L-seryl-tRNA(Sec) from L-serine and tRNA(Sec): step 1/1. Catalyzes the attachment of serine to tRNA(Ser). Is also able to aminoacylate tRNA(Sec) with serine, to form the misacylated tRNA L-seryl-tRNA(Sec), which will be further converted into selenocysteinyl-tRNA(Sec). This is Serine--tRNA ligase from Bordetella bronchiseptica (strain ATCC BAA-588 / NCTC 13252 / RB50) (Alcaligenes bronchisepticus).